Here is a 681-residue protein sequence, read N- to C-terminus: Methionine--tRNA ligase (681 aa).

A 'HIGH' region motif is present at residues 14–24 (PYANGSIHLGH). Zn(2+) is bound by residues C145, C148, C158, and C161. The 'KMSKS' region motif lies at 331–335 (KMSKS). ATP is bound at residue K334. The tRNA-binding domain maps to 579-681 (AFAAVDLRIA…AGAKPGQRVH (103 aa)).

This sequence belongs to the class-I aminoacyl-tRNA synthetase family. MetG type 1 subfamily. In terms of assembly, homodimer. Zn(2+) is required as a cofactor.

It is found in the cytoplasm. It carries out the reaction tRNA(Met) + L-methionine + ATP = L-methionyl-tRNA(Met) + AMP + diphosphate. Is required not only for elongation of protein synthesis but also for the initiation of all mRNA translation through initiator tRNA(fMet) aminoacylation. This is Methionine--tRNA ligase from Azotobacter vinelandii (strain DJ / ATCC BAA-1303).